The sequence spans 168 residues: GTP-dependent dephospho-CoA kinase (168 aa).

The GTP site is built by aspartate 49, valine 50, valine 51, aspartate 68, lysine 70, and glutamate 120.

The protein belongs to the GTP-dependent DPCK family.

The catalysed reaction is 3'-dephospho-CoA + GTP = GDP + CoA + H(+). It participates in cofactor biosynthesis; coenzyme A biosynthesis. Functionally, catalyzes the GTP-dependent phosphorylation of the 3'-hydroxyl group of dephosphocoenzyme A to form coenzyme A (CoA). In Pyrobaculum neutrophilum (strain DSM 2338 / JCM 9278 / NBRC 100436 / V24Sta) (Thermoproteus neutrophilus), this protein is GTP-dependent dephospho-CoA kinase.